The chain runs to 522 residues: Ankyrin repeat and death domain-containing protein 1A (522 aa).

ANK repeat units follow at residues 14 to 43 (PLER…NTRA), 47 to 76 (VGRV…AVDE), 90 to 119 (FGMN…KIHC), 123 to 152 (DGLT…DVAL), 158 to 187 (LGRT…DHNV), 191 to 220 (EGNT…DLEE), 224 to 253 (EGLT…TVNA), 257 to 286 (KNLS…CANV), 290 to 319 (QGAS…DVNA), 323 to 352 (RQQT…DLNL), and 356 to 385 (QGKT…FYRW). One can recognise a Death domain in the interval 413-501 (SVLWRLASRY…DLAGWSTMAR (89 aa)).

In Homo sapiens (Human), this protein is Ankyrin repeat and death domain-containing protein 1A (ANKDD1A).